A 35-amino-acid chain; its full sequence is Photosystem II reaction center protein M (35 aa).

Residues 5 to 25 traverse the membrane as a helical segment; it reads ILAFIATALFILVPTAFLLII.

It belongs to the PsbM family. PSII is composed of 1 copy each of membrane proteins PsbA, PsbB, PsbC, PsbD, PsbE, PsbF, PsbH, PsbI, PsbJ, PsbK, PsbL, PsbM, PsbT, PsbX, PsbY, PsbZ, Psb30/Ycf12, at least 3 peripheral proteins of the oxygen-evolving complex and a large number of cofactors. It forms dimeric complexes.

It localises to the plastid. Its subcellular location is the chloroplast thylakoid membrane. One of the components of the core complex of photosystem II (PSII). PSII is a light-driven water:plastoquinone oxidoreductase that uses light energy to abstract electrons from H(2)O, generating O(2) and a proton gradient subsequently used for ATP formation. It consists of a core antenna complex that captures photons, and an electron transfer chain that converts photonic excitation into a charge separation. This subunit is found at the monomer-monomer interface. In Amborella trichopoda, this protein is Photosystem II reaction center protein M.